The following is a 92-amino-acid chain: Small ribosomal subunit protein uS19 (92 aa).

It belongs to the universal ribosomal protein uS19 family.

Protein S19 forms a complex with S13 that binds strongly to the 16S ribosomal RNA. This chain is Small ribosomal subunit protein uS19, found in Paracidovorax citrulli (strain AAC00-1) (Acidovorax citrulli).